The chain runs to 53 residues: Sec-independent protein translocase protein TatA (53 aa).

Residues Met-1–Ala-21 traverse the membrane as a helical segment.

The protein belongs to the TatA/E family. The Tat system comprises two distinct complexes: a TatABC complex, containing multiple copies of TatA, TatB and TatC subunits, and a separate TatA complex, containing only TatA subunits. Substrates initially bind to the TatABC complex, which probably triggers association of the separate TatA complex to form the active translocon.

The protein resides in the cell inner membrane. In terms of biological role, part of the twin-arginine translocation (Tat) system that transports large folded proteins containing a characteristic twin-arginine motif in their signal peptide across membranes. TatA could form the protein-conducting channel of the Tat system. This chain is Sec-independent protein translocase protein TatA, found in Rickettsia africae (strain ESF-5).